A 252-amino-acid chain; its full sequence is DNA-(apurinic or apyrimidinic site) lyase Nei2 (252 aa).

Proline 2 acts as the Schiff-base intermediate with DNA in catalysis. Glutamate 3 (proton donor) is an active-site residue. The Proton donor (in beta-elimination) role is filled by lysine 51. The FPG-type zinc finger occupies 216–250 (WVYGRAGEPCRRCGTLIQTDRGGERVTYWCPVCQT). Zn(2+)-binding residues include cysteine 225, cysteine 228, cysteine 245, and cysteine 248.

It belongs to the FPG family. As to quaternary structure, monomer. Zn(2+) serves as cofactor.

The catalysed reaction is 2'-deoxyribonucleotide-(2'-deoxyribose 5'-phosphate)-2'-deoxyribonucleotide-DNA = a 3'-end 2'-deoxyribonucleotide-(2,3-dehydro-2,3-deoxyribose 5'-phosphate)-DNA + a 5'-end 5'-phospho-2'-deoxyribonucleoside-DNA + H(+). Functionally, involved in base excision repair of DNA damaged by oxidation or by mutagenic agents. Acts as DNA glycosylase that recognizes and removes damaged bases. Involved in the repair of psoralen-UVA DNA cross-links. A lyase that cleaves single-stranded (ss)DNA but not double-stranded (ds)DNA with an abasic site. Has 5-hydroxyuracil (5-OH-U) glycosylase activity on ssDNA with 5-OH-U, with 10-fold less activity on dsDNA, but weak to no uracil glycosylase activity. Has weak glycosylase activity on thymine glycol and dihydrothymine residues in ssDNA. Cleaves the DNA backbone by beta-delta elimination to generate a single-strand break at the site of the removed base with both 3'- and 5'-phosphates. The sequence is that of DNA-(apurinic or apyrimidinic site) lyase Nei2 from Mycolicibacterium smegmatis (strain ATCC 700084 / mc(2)155) (Mycobacterium smegmatis).